Here is a 140-residue protein sequence, read N- to C-terminus: Putative pre-16S rRNA nuclease (140 aa).

It belongs to the YqgF nuclease family.

The protein resides in the cytoplasm. Functionally, could be a nuclease involved in processing of the 5'-end of pre-16S rRNA. The sequence is that of Putative pre-16S rRNA nuclease from Pasteurella multocida (strain Pm70).